A 231-amino-acid chain; its full sequence is 2-C-methyl-D-erythritol 4-phosphate cytidylyltransferase (231 aa).

This sequence belongs to the IspD/TarI cytidylyltransferase family. IspD subfamily.

The enzyme catalyses 2-C-methyl-D-erythritol 4-phosphate + CTP + H(+) = 4-CDP-2-C-methyl-D-erythritol + diphosphate. It participates in isoprenoid biosynthesis; isopentenyl diphosphate biosynthesis via DXP pathway; isopentenyl diphosphate from 1-deoxy-D-xylulose 5-phosphate: step 2/6. Functionally, catalyzes the formation of 4-diphosphocytidyl-2-C-methyl-D-erythritol from CTP and 2-C-methyl-D-erythritol 4-phosphate (MEP). In Pseudoalteromonas atlantica (strain T6c / ATCC BAA-1087), this protein is 2-C-methyl-D-erythritol 4-phosphate cytidylyltransferase.